Consider the following 286-residue polypeptide: Elongation factor Ts (286 aa).

The tract at residues 79-82 is involved in Mg(2+) ion dislocation from EF-Tu; it reads TDFV.

Belongs to the EF-Ts family.

The protein localises to the cytoplasm. Functionally, associates with the EF-Tu.GDP complex and induces the exchange of GDP to GTP. It remains bound to the aminoacyl-tRNA.EF-Tu.GTP complex up to the GTP hydrolysis stage on the ribosome. This Wolbachia sp. subsp. Drosophila simulans (strain wRi) protein is Elongation factor Ts.